We begin with the raw amino-acid sequence, 729 residues long: Glycerophosphodiester phosphodiesterase GDPDL5 (729 aa).

An N-terminal signal peptide occupies residues 1-22 (MACPRVIFLILITFFILQTAFS). GP-PDE domains are found at residues 33-320 (PAVI…YRAI) and 337-645 (ITII…ARYR). N88, N162, N218, N227, N285, N302, N390, N401, and N507 each carry an N-linked (GlcNAc...) asparagine glycan. A helical membrane pass occupies residues 709–729 (AIEVPFAFIAMAILVCFFISV).

This sequence belongs to the glycerophosphoryl diester phosphodiesterase family. As to expression, expressed in stems, flowers and siliques.

The protein localises to the membrane. The enzyme catalyses a sn-glycero-3-phosphodiester + H2O = an alcohol + sn-glycerol 3-phosphate + H(+). The chain is Glycerophosphodiester phosphodiesterase GDPDL5 from Arabidopsis thaliana (Mouse-ear cress).